The sequence spans 121 residues: MTSSTSTAATAQAHGRFIRGSVSKVRRVLDQIRGRTYRDALIMLEFMPYRSTGPITKVLRSAVANAENNLGLDPASLVISSASADMGPSMKRYRPRAQGRAFQIKKQTCHISIAVAVQTDS.

It belongs to the universal ribosomal protein uL22 family. As to quaternary structure, part of the 50S ribosomal subunit.

Functionally, this protein binds specifically to 23S rRNA; its binding is stimulated by other ribosomal proteins, e.g. L4, L17, and L20. It is important during the early stages of 50S assembly. It makes multiple contacts with different domains of the 23S rRNA in the assembled 50S subunit and ribosome. Its function is as follows. The globular domain of the protein is located near the polypeptide exit tunnel on the outside of the subunit, while an extended beta-hairpin is found that lines the wall of the exit tunnel in the center of the 70S ribosome. This Synechococcus sp. (strain CC9902) protein is Large ribosomal subunit protein uL22.